The following is a 472-amino-acid chain: Interferon-induced protein with tetratricopeptide repeats 2 (472 aa).

Ser2 is modified (N-acetylserine). TPR repeat units follow at residues 51–89, 90–135, 136–171, 172–208, 244–277, 278–333, 334–364, 365–403, and 404–445; these read ATMC…PDQV, EIRS…RIEN, PALD…DPKN, PEFT…SPDN, IDTL…LPNN, AYVH…MLEY, SCSF…KDLP, PGPK…KKKT, and IPQK…GGQQ. The segment at 441 to 472 is disordered; the sequence is GGGQQADKDSERGVDSANQVPSASLDEDGAEY.

Belongs to the IFIT family. As to quaternary structure, domain-swapped homodimer. Component of an interferon-dependent multiprotein complex, at least composed of IFIT1, IFIT2 and IFIT3. Interacts with IFIT1 and IFIT3. Interacts with STING1/MITA and disrupts its interaction with MAVS or TBK1. Interacts with EIF3C.

It localises to the cytoplasm. The protein localises to the endoplasmic reticulum. Functionally, IFN-induced antiviral protein which inhibits expression of viral messenger RNAs lacking 2'-O-methylation of the 5' cap. The ribose 2'-O-methylation would provide a molecular signature to distinguish between self and non-self mRNAs by the host during viral infection. Viruses evolved several ways to evade this restriction system such as encoding their own 2'-O-methylase for their mRNAs or by stealing host cap containing the 2'-O-methylation (cap snatching mechanism). Binds AU-rich viral RNAs, with or without 5' triphosphorylation, RNA-binding is required for antiviral activity. Can promote apoptosis. The chain is Interferon-induced protein with tetratricopeptide repeats 2 (Ifit2) from Mus musculus (Mouse).